We begin with the raw amino-acid sequence, 78 residues long: Large ribosomal subunit protein uL29 (78 aa).

The protein belongs to the universal ribosomal protein uL29 family.

The sequence is that of Large ribosomal subunit protein uL29 from Salinispora arenicola (strain CNS-205).